A 296-amino-acid chain; its full sequence is Mycothiol acetyltransferase (296 aa).

N-acetyltransferase domains are found at residues 1–148 and 151–296; these read MTEW…IRVD and VTVR…YGRA. 1D-myo-inositol 2-(L-cysteinylamino)-2-deoxy-alpha-D-glucopyranoside is bound at residue Glu34. Residues 79–81 and 87–92 each bind acetyl-CoA; these read LVV and RRGIGS. Glu178, Lys219, and Glu229 together coordinate 1D-myo-inositol 2-(L-cysteinylamino)-2-deoxy-alpha-D-glucopyranoside. Acetyl-CoA is bound by residues 233–235 and 240–246; these read VGV and QGRGLGH. Tyr267 serves as a coordination point for 1D-myo-inositol 2-(L-cysteinylamino)-2-deoxy-alpha-D-glucopyranoside. 272-277 lines the acetyl-CoA pocket; sequence NQAALR.

This sequence belongs to the acetyltransferase family. MshD subfamily. Monomer.

The enzyme catalyses 1D-myo-inositol 2-(L-cysteinylamino)-2-deoxy-alpha-D-glucopyranoside + acetyl-CoA = mycothiol + CoA + H(+). Functionally, catalyzes the transfer of acetyl from acetyl-CoA to desacetylmycothiol (Cys-GlcN-Ins) to form mycothiol. The polypeptide is Mycothiol acetyltransferase (Mycobacteroides abscessus (strain ATCC 19977 / DSM 44196 / CCUG 20993 / CIP 104536 / JCM 13569 / NCTC 13031 / TMC 1543 / L948) (Mycobacterium abscessus)).